The chain runs to 459 residues: UDP-N-acetylmuramoylalanine--D-glutamate ligase (459 aa).

Position 131–137 (131–137) interacts with ATP; that stretch reads GANGKST.

It belongs to the MurCDEF family.

The protein localises to the cytoplasm. It catalyses the reaction UDP-N-acetyl-alpha-D-muramoyl-L-alanine + D-glutamate + ATP = UDP-N-acetyl-alpha-D-muramoyl-L-alanyl-D-glutamate + ADP + phosphate + H(+). It participates in cell wall biogenesis; peptidoglycan biosynthesis. Functionally, cell wall formation. Catalyzes the addition of glutamate to the nucleotide precursor UDP-N-acetylmuramoyl-L-alanine (UMA). The chain is UDP-N-acetylmuramoylalanine--D-glutamate ligase from Methylococcus capsulatus (strain ATCC 33009 / NCIMB 11132 / Bath).